The following is a 234-amino-acid chain: Sperm flagellar protein 1 (234 aa).

A Calponin-homology (CH) domain is found at 7–112 (EEALHQLYLW…VLIPLRQRLE (106 aa)). Positions 181–234 (VLQIAEKEQELLASQETVQVLQMKVKRLEHLLQLKNVRIDDLSRRLQQAERKQR) are essential for homodimerization and microtubule bundling activity.

As to quaternary structure, homodimer. Interacts with actin, TJP1, CGN and CDH1. Expressed predominantly in the seminiferous epithelium of adult testis. Expressed in pillar cells of the organ of Corti (at protein level). Expressed in brain, kidney, lung and testis. Highly expressed in the trachea, lung and oviduct.

It is found in the cytoplasm. It localises to the cell projection. The protein localises to the cilium. Its subcellular location is the flagellum. The protein resides in the cytoskeleton. It is found in the cilium axoneme. It localises to the apical cell membrane. The protein localises to the basolateral cell membrane. Its subcellular location is the stress fiber. The protein resides in the microvillus. It is found in the lamellipodium. It localises to the filopodium. In terms of biological role, microtubule-associated protein that promotes microtubule bundling and stabilizes microtubules against depolymerization in response to cold shock. Microtubule-associated protein involved in the stabilization of microtubules along the axis of migration during radial intercalation. Promotes the establishment and stabilization of an axis of microtubules required for the active migration of cells into the outer epithelium. Essential for ciliary central apparatus formation which requires both its microtubule-binding and bundling activities and for ciliary localization of HYDIN and SPAG6 in ependymal cilia. Binds actin in intestinal epithelial cells (IECs), essential for IECs survival and contributes to formation of filopodia and lamellipodia in migrating IECs. Regulates planar cell polarity signaling pathway and asymmetric microtubule accumulation in ciliated epithelia. The protein is Sperm flagellar protein 1 (Spef1) of Mus musculus (Mouse).